The following is a 269-amino-acid chain: Serine/arginine-rich splicing factor 5 (269 aa).

The RRM 1 domain maps to 4–74; it reads CRVFIGRLNP…ERVTIEHARA (71 aa). The segment at 73 to 105 is disordered; the sequence is RARSRGGRGRGRYSDRFSSRRPRNDRRNAPPVR. Basic residues predominate over residues 74 to 83; that stretch reads ARSRGGRGRG. Position 86 is a phosphoserine (serine 86). Positions 108 to 189 constitute an RRM 2 domain; sequence NRLIVENLSS…SKRHRSRSRS (82 aa). Lysine 167 is subject to N6-acetyllysine. The tract at residues 174–269 is disordered; sequence IKLIEGSKRH…SRSRSVDSGN (96 aa). The span at 181–226 shows a compositional bias: basic residues; the sequence is KRHRSRSRSRSRTRSSSRSRSRSRSRRSKSYSRSRSRSRSRSKSRS. Phosphoserine is present on residues serine 224, serine 226, serine 230, serine 247, and serine 250. The segment covering 239–251 has biased composition (low complexity); the sequence is RGSSSRSKSPASV.

It belongs to the splicing factor SR family. As to quaternary structure, found in a pre-mRNA splicing complex with SRSF4/SFRS4, SRSF5/SFRS5, SNRNP70, SNRPA1, SRRM1 and SRRM2. Interacts with RBMY; the interaction inhibits SRSF5 pre-mRNA splicing. Interacts (via RS domain) with PHF5A (via N-terminus). Extensively phosphorylated on serine residues in the RS domain.

It localises to the nucleus. In terms of biological role, may be required for progression through G1 and entry into S phase of cell growth. May play a regulatory role in pre-mRNA splicing. Autoregulates its own expression. Plays a role in constitutive splicing and can modulate the selection of alternative splice sites. This chain is Serine/arginine-rich splicing factor 5 (Srsf5), found in Mus musculus (Mouse).